Consider the following 263-residue polypeptide: Pyridoxine 5'-phosphate synthase (263 aa).

N15 is a 3-amino-2-oxopropyl phosphate binding site. 17-18 (DH) provides a ligand contact to 1-deoxy-D-xylulose 5-phosphate. R26 serves as a coordination point for 3-amino-2-oxopropyl phosphate. H51 acts as the Proton acceptor in catalysis. 1-deoxy-D-xylulose 5-phosphate-binding residues include R53 and H58. E78 acts as the Proton acceptor in catalysis. T108 is a 1-deoxy-D-xylulose 5-phosphate binding site. H199 (proton donor) is an active-site residue. Residues G200 and 221 to 222 (GH) contribute to the 3-amino-2-oxopropyl phosphate site.

Belongs to the PNP synthase family. In terms of assembly, homooctamer; tetramer of dimers.

The protein localises to the cytoplasm. The enzyme catalyses 3-amino-2-oxopropyl phosphate + 1-deoxy-D-xylulose 5-phosphate = pyridoxine 5'-phosphate + phosphate + 2 H2O + H(+). Its pathway is cofactor biosynthesis; pyridoxine 5'-phosphate biosynthesis; pyridoxine 5'-phosphate from D-erythrose 4-phosphate: step 5/5. Catalyzes the complicated ring closure reaction between the two acyclic compounds 1-deoxy-D-xylulose-5-phosphate (DXP) and 3-amino-2-oxopropyl phosphate (1-amino-acetone-3-phosphate or AAP) to form pyridoxine 5'-phosphate (PNP) and inorganic phosphate. In Ralstonia nicotianae (strain ATCC BAA-1114 / GMI1000) (Ralstonia solanacearum), this protein is Pyridoxine 5'-phosphate synthase.